We begin with the raw amino-acid sequence, 229 residues long: MDGNHRFTPDSKEFNTVVKSKESSTGRNPYQTPPLEHNGTHHQTNYSRKKTNLAIIISNFLSEISRPLSNGKINNSTHNILKFLNEVLKRSKCSKENAVLATFYFQKIHQSRGVRDESSLPEFSHCSRRIFLCCLILSHKFLNDNTYSMKNWQIISGLHAKDLSLMERWCLGKLNYELAIPYDEFLLWETNTLMKAKLRVGTPANAPVKRPRESDNDYDANSWKQIKSC.

Over residues 1–24 the composition is skewed to basic and acidic residues; the sequence is MDGNHRFTPDSKEFNTVVKSKESS. The disordered stretch occupies residues 1 to 46; it reads MDGNHRFTPDSKEFNTVVKSKESSTGRNPYQTPPLEHNGTHHQTNY.

It belongs to the cyclin family. PCL1,2 subfamily. Forms a cyclin-CDK complex with PHO85.

Its function is as follows. Cyclin partner of the cyclin-dependent kinase (CDK) PHO85. Positively controls degradation of transcription factor GCN4 under favorable growth conditions. The PCL5-PHO85 cyclin-CDK holoenzyme phosphorylates GCN4, which is required for its degradation by the E3 ubiquitin ligase complex SCF(Cdc4). Amino acid starvation reduces PCL5-PHO85-associated GCN4 kinase activity and leads to stabilization of GCN4. The chain is PHO85 cyclin-5 (PCL5) from Saccharomyces cerevisiae (strain ATCC 204508 / S288c) (Baker's yeast).